Consider the following 286-residue polypeptide: Protein Bride of doubletime (286 aa).

In terms of assembly, interacts with dco (via nuclear localization signal). Interacts with Ankrd49; interaction promotes the stability of both complex members.

It is found in the cytoplasm. It localises to the cytosol. The protein resides in the cell membrane. Its function is as follows. Functions in planar polarity establishment and circadian rhythms by promoting the activity and localization of dco/dbt. Required for regulating the levels of dco/dbt and per in the nuclei of photoreceptor cells and thereby is involved in normal oscillations of the circadian clock proteins in the eye. In the dark, the cry circadian and rhodopsin visual pathways, activate the accumulation of the protein into Arr1- and Arr2-dependent cytosolic foci which are required for dco localization to photoreceptor nuclei. It is possible that the accumulation into foci results in the dissociation of the protein from dco, thus allowing dco to interact with importins and microtubles for nuclear transport. By promoting nuclei localization and kinase activity of dco towards per, it is essential for regulating normal cycles of per nuclear accumulation in brain circadian neurons and thus is important for normal circadian behavior. Essential for regulating the establishment of planar cell polarity in the wing. Forms a complex with Ankrd49 which likely functions in the regulation of planar polarity by promoting the activity of dco during planar polarity establishment. Within the complex, directly promotes dco activity in regulating phosphorylation and asymmetric localization of core planar polarity proteins such as dsh. This Drosophila melanogaster (Fruit fly) protein is Protein Bride of doubletime.